Consider the following 541-residue polypeptide: MPKLIAFNEEARRGLERGMNTLADAVKVTLGPKGRNVVLEKKWGAPTITNDGVSIAKEIELEDPYEKIGAELVKEVAKKTDDVAGDGTTTATVLAQAMVREGLRNVAAGANPMGLKRGIEAAVEAVSGQLLSMAKDVETKEQIASTASISAADTTVGEIIAEAMDKVGKEGVITVEESNTFGLDLELTEGMRFDKGYISAYFVTDPERMETVLEDPYVLIANQKISSVKDLLPLLEKVMQSGKPLLILAEDVDGEALSTLVVNKIRGTFKSVAVKAPGFGDRRKAMLQDIAILTGGQVISEEVGLKLESTGIELLGQARKVVITKDETTIVEGAGDADQIAGRVNQIRAEIEKSDSDYDREKLQERLAKLAGGVAVIKVGAATEVELKERKHRIEDAVRNAKAAVEEGIVAGGGVALVQAANAAFDKLDLTGDEAVGAQIVRFATDAPLKQIAINAGLEGGVVAEKVRGLTAGHGLNAATGEYVDMIASGIIDPAKVTRSALQNAASIAALFLTTEAVVADKPEKAAPMGDPSGGMGGMDF.

ATP is bound by residues 29–32 (TLGP), 86–90 (DGTTT), Gly413, 477–479 (NAA), and Asp493.

This sequence belongs to the chaperonin (HSP60) family. As to quaternary structure, forms a cylinder of 14 subunits composed of two heptameric rings stacked back-to-back. Interacts with the co-chaperonin GroES.

It is found in the cytoplasm. It carries out the reaction ATP + H2O + a folded polypeptide = ADP + phosphate + an unfolded polypeptide.. Together with its co-chaperonin GroES, plays an essential role in assisting protein folding. The GroEL-GroES system forms a nano-cage that allows encapsulation of the non-native substrate proteins and provides a physical environment optimized to promote and accelerate protein folding. The polypeptide is Chaperonin GroEL 2 (Nocardioides sp. (strain ATCC BAA-499 / JS614)).